Here is a 180-residue protein sequence, read N- to C-terminus: Signal peptidase complex subunit 2 (180 aa).

The Cytoplasmic segment spans residues 1–45 (MSDERITVVNKWDGPTVKNGLDEVVKKILNDKVGWTEQHNLMNLR). Residues 46–66 (LLISFIGVAFSAFACGYDFYA) form a helical membrane-spanning segment. The Lumenal segment spans residues 67-72 (PFPKSK). Residues 73–93 (IVLLVCSVSYFICMGVLQLFQ) form a helical membrane-spanning segment. The Cytoplasmic portion of the chain corresponds to 94 to 180 (WYVEKDCFYE…LWARLIRSEQ (87 aa)).

The protein belongs to the SPCS2 family. As to quaternary structure, component of the signal peptidase complex (SPC) composed of a catalytic subunit sec-11 and three accessory subunits spcs-1, spcs-2 and spcs-3. The complex induces a local thinning of the ER membrane which is used to measure the length of the signal peptide (SP) h-region of protein substrates. This ensures the selectivity of the complex towards h-regions shorter than 18-20 amino acids.

The protein localises to the endoplasmic reticulum membrane. Component of the signal peptidase complex (SPC) which catalyzes the cleavage of N-terminal signal sequences from nascent proteins as they are translocated into the lumen of the endoplasmic reticulum. Enhances the enzymatic activity of SPC and facilitates the interactions between different components of the translocation site. The sequence is that of Signal peptidase complex subunit 2 from Caenorhabditis briggsae.